The primary structure comprises 345 residues: Holliday junction branch migration complex subunit RuvB (345 aa).

Residues 1–182 (MQRLVEVESV…FGMHFRMQFY (182 aa)) are large ATPase domain (RuvB-L). ATP is bound by residues L21, R22, G63, K66, T67, T68, 129–131 (EDY), R172, Y182, and R219. T67 provides a ligand contact to Mg(2+). The interval 183 to 253 (TEIELAKIIQ…RCKYALDELG (71 aa)) is small ATPAse domain (RuvB-S). The head domain (RuvB-H) stretch occupies residues 256–345 (ESGFDEMDIN…EDDLTQGKLF (90 aa)). R310 and R315 together coordinate DNA.

The protein belongs to the RuvB family. In terms of assembly, homohexamer. Forms an RuvA(8)-RuvB(12)-Holliday junction (HJ) complex. HJ DNA is sandwiched between 2 RuvA tetramers; dsDNA enters through RuvA and exits via RuvB. An RuvB hexamer assembles on each DNA strand where it exits the tetramer. Each RuvB hexamer is contacted by two RuvA subunits (via domain III) on 2 adjacent RuvB subunits; this complex drives branch migration. In the full resolvosome a probable DNA-RuvA(4)-RuvB(12)-RuvC(2) complex forms which resolves the HJ.

It is found in the cytoplasm. It catalyses the reaction ATP + H2O = ADP + phosphate + H(+). The RuvA-RuvB-RuvC complex processes Holliday junction (HJ) DNA during genetic recombination and DNA repair, while the RuvA-RuvB complex plays an important role in the rescue of blocked DNA replication forks via replication fork reversal (RFR). RuvA specifically binds to HJ cruciform DNA, conferring on it an open structure. The RuvB hexamer acts as an ATP-dependent pump, pulling dsDNA into and through the RuvAB complex. RuvB forms 2 homohexamers on either side of HJ DNA bound by 1 or 2 RuvA tetramers; 4 subunits per hexamer contact DNA at a time. Coordinated motions by a converter formed by DNA-disengaged RuvB subunits stimulates ATP hydrolysis and nucleotide exchange. Immobilization of the converter enables RuvB to convert the ATP-contained energy into a lever motion, pulling 2 nucleotides of DNA out of the RuvA tetramer per ATP hydrolyzed, thus driving DNA branch migration. The RuvB motors rotate together with the DNA substrate, which together with the progressing nucleotide cycle form the mechanistic basis for DNA recombination by continuous HJ branch migration. Branch migration allows RuvC to scan DNA until it finds its consensus sequence, where it cleaves and resolves cruciform DNA. This chain is Holliday junction branch migration complex subunit RuvB, found in Aliarcobacter butzleri (strain RM4018) (Arcobacter butzleri).